The following is a 296-amino-acid chain: 4-hydroxybenzoate octaprenyltransferase (296 aa).

Helical transmembrane passes span 28–48, 55–75, 102–122, 145–167, 174–196, 219–239, 241–261, and 275–295; these read PIGI…AGNG, VLIF…INDF, AVML…CTNA, TYYP…FTAA, SAWL…YAMV, VIIL…GNRF, LGGW…WEFW, and FLHN…DYAL.

The protein belongs to the UbiA prenyltransferase family. Mg(2+) serves as cofactor.

The protein resides in the cell inner membrane. It catalyses the reaction all-trans-octaprenyl diphosphate + 4-hydroxybenzoate = 4-hydroxy-3-(all-trans-octaprenyl)benzoate + diphosphate. The protein operates within cofactor biosynthesis; ubiquinone biosynthesis. Functionally, catalyzes the prenylation of para-hydroxybenzoate (PHB) with an all-trans polyprenyl group. Mediates the second step in the final reaction sequence of ubiquinone-8 (UQ-8) biosynthesis, which is the condensation of the polyisoprenoid side chain with PHB, generating the first membrane-bound Q intermediate 3-octaprenyl-4-hydroxybenzoate. This Pseudomonas entomophila (strain L48) protein is 4-hydroxybenzoate octaprenyltransferase.